The primary structure comprises 183 residues: MKQKYEDWLNDVPDNQEDDEDDEIIWVSKSEIKRDAEALKDLGAELVDLGKNALEKIPLDDDLRAAVELAQRIKKEGRRRQLQLIGKMLRARDPEPIQTALDKLNNRHNQQVALFHKLEQLRDRLIEEGDDVVPDILALYPHADRQQLRSLVRNAQKEKAANKPPKSARQIFQYLRELAETTD.

The segment at 1 to 20 (MKQKYEDWLNDVPDNQEDDE) is disordered.

Belongs to the DarP family.

It localises to the cytoplasm. Its function is as follows. Member of a network of 50S ribosomal subunit biogenesis factors which assembles along the 30S-50S interface, preventing incorrect 23S rRNA structures from forming. Promotes peptidyl transferase center (PTC) maturation. In Pectobacterium carotovorum subsp. carotovorum (strain PC1), this protein is Dual-action ribosomal maturation protein DarP.